The following is a 302-amino-acid chain: Protein transport protein SEC13 homolog B (302 aa).

WD repeat units follow at residues glycine 9–glutamine 48, glycine 54–glutamine 95, aspartate 101–threonine 142, alanine 148–aspartate 201, lysine 208–glutamate 251, and aspartate 257–glutamine 296.

The protein belongs to the WD repeat SEC13 family. In terms of assembly, part of the nuclear pore complex (NPC). The NPC has an eight-fold symmetrical structure comprising a central transport channel and two rings, the cytoplasmic and nuclear rings, to which eight filaments are attached. The cytoplasmic filaments have loose ends, while the nuclear filaments are joined in a distal ring, forming a nuclear basket. NPCs are highly dynamic in configuration and composition, and can be devided in 3 subcomplexes, the NUP62 subcomplex, the NUP107-160 subcomplex and the NUP93 subcomplex, containing approximately 30 different nucleoporin proteins. Interacts with MAG5, SEC31A and SEC31B.

The protein resides in the golgi apparatus. The protein localises to the endoplasmic reticulum. Its subcellular location is the nucleus envelope. It localises to the nucleus. It is found in the nuclear pore complex. Functionally, required for protein transport from the endoplasmic reticulum to the Golgi apparatus. In Arabidopsis thaliana (Mouse-ear cress), this protein is Protein transport protein SEC13 homolog B.